The chain runs to 618 residues: uncharacterized protein (618 aa).

It to Rhizobium NGR234A y4qD.

This is an uncharacterized protein from Sinorhizobium fredii (strain NBRC 101917 / NGR234).